A 488-amino-acid chain; its full sequence is Protein nucleotidyltransferase YdiU (488 aa).

Positions 91, 93, 94, 114, 126, 127, 177, and 184 each coordinate ATP. Positions 108–127 (RFDIQLKGSGPTPYSRRGDG) are disordered. Residue D253 is the Proton acceptor of the active site. Residues N254 and D263 each coordinate Mg(2+). Residue D263 participates in ATP binding.

The protein belongs to the SELO family. Requires Mg(2+) as cofactor. Mn(2+) is required as a cofactor.

The catalysed reaction is L-seryl-[protein] + ATP = 3-O-(5'-adenylyl)-L-seryl-[protein] + diphosphate. It carries out the reaction L-threonyl-[protein] + ATP = 3-O-(5'-adenylyl)-L-threonyl-[protein] + diphosphate. The enzyme catalyses L-tyrosyl-[protein] + ATP = O-(5'-adenylyl)-L-tyrosyl-[protein] + diphosphate. It catalyses the reaction L-histidyl-[protein] + UTP = N(tele)-(5'-uridylyl)-L-histidyl-[protein] + diphosphate. The catalysed reaction is L-seryl-[protein] + UTP = O-(5'-uridylyl)-L-seryl-[protein] + diphosphate. It carries out the reaction L-tyrosyl-[protein] + UTP = O-(5'-uridylyl)-L-tyrosyl-[protein] + diphosphate. Its function is as follows. Nucleotidyltransferase involved in the post-translational modification of proteins. It can catalyze the addition of adenosine monophosphate (AMP) or uridine monophosphate (UMP) to a protein, resulting in modifications known as AMPylation and UMPylation. In Bacillus anthracis (strain A0248), this protein is Protein nucleotidyltransferase YdiU.